Here is a 162-residue protein sequence, read N- to C-terminus: 2-C-methyl-D-erythritol 2,4-cyclodiphosphate synthase (162 aa).

A divalent metal cation contacts are provided by Asp9 and His11. Residues 9–11 (DFH) and 37–38 (HS) each bind 4-CDP-2-C-methyl-D-erythritol 2-phosphate. His45 provides a ligand contact to a divalent metal cation. 4-CDP-2-C-methyl-D-erythritol 2-phosphate is bound by residues 59–61 (DIG), 64–68 (FPDTD), 135–138 (TTSE), and Arg145.

This sequence belongs to the IspF family. As to quaternary structure, homotrimer. A divalent metal cation is required as a cofactor.

The catalysed reaction is 4-CDP-2-C-methyl-D-erythritol 2-phosphate = 2-C-methyl-D-erythritol 2,4-cyclic diphosphate + CMP. The protein operates within isoprenoid biosynthesis; isopentenyl diphosphate biosynthesis via DXP pathway; isopentenyl diphosphate from 1-deoxy-D-xylulose 5-phosphate: step 4/6. Involved in the biosynthesis of isopentenyl diphosphate (IPP) and dimethylallyl diphosphate (DMAPP), two major building blocks of isoprenoid compounds. Catalyzes the conversion of 4-diphosphocytidyl-2-C-methyl-D-erythritol 2-phosphate (CDP-ME2P) to 2-C-methyl-D-erythritol 2,4-cyclodiphosphate (ME-CPP) with a corresponding release of cytidine 5-monophosphate (CMP). This Leptospira biflexa serovar Patoc (strain Patoc 1 / Ames) protein is 2-C-methyl-D-erythritol 2,4-cyclodiphosphate synthase.